A 923-amino-acid chain; its full sequence is Periodic tryptophan protein 2 (923 aa).

5 WD repeats span residues 12 to 52 (GTVY…TFEY), 53 to 93 (EHRK…LHHF), 94 to 132 (NFKE…KDRQ), 144 to 183 (GHFQ…KNLA), and 189 to 228 (GHRD…SDDD). 2 positions are modified to phosphoserine: Ser225 and Ser232. WD repeat units follow at residues 258–297 (ANQA…LIQQ), 300–340 (MGQN…YILK), 343–382 (GHFD…CLAT), 385–424 (EHTS…NFRT), 428–470 (TERI…DALS), 471–510 (GHEG…QQVE), 513–552 (EVYS…QVGN), and 575–614 (ERSK…LLKR). Ser651 and Ser664 each carry phosphoserine. Residues 653–674 (LEDRIDNSLPGSQRGGDLSTRK) are disordered. Residues 676 to 714 (RPEVRVTSVQFSPTANAFAAASTEGLLIYSTNDTILFDP) form a WD 14 repeat. 2 stretches are compositionally biased toward acidic residues: residues 869 to 893 (KDDA…DEEG) and 911 to 923 (DSSD…KELP). The segment at 869–923 (KDDADEDNEENEENDVVMESDDEEGWIGFNGKDNKLPLSNENDSSDEEENEKELP) is disordered. Ser912 and Ser913 each carry phosphoserine.

The protein belongs to the WD repeat PWP2 family. In terms of assembly, interacts with snoRNA U3. Interacts with MPP10. Component of the ribosomal small subunit (SSU) processome composed of at least 40 protein subunits and snoRNA U3.

The protein localises to the nucleus. Its subcellular location is the nucleolus. In terms of biological role, required for bud-site selection and cell separation. Also involved in nucleolar processing of pre-18S ribosomal RNA. The polypeptide is Periodic tryptophan protein 2 (PWP2) (Saccharomyces cerevisiae (strain ATCC 204508 / S288c) (Baker's yeast)).